Reading from the N-terminus, the 118-residue chain is Basic phospholipase A2 3 (118 aa).

Cystine bridges form between C11–C71, C27–C117, C29–C45, C44–C98, C51–C91, C60–C84, and C78–C89. Ca(2+) is bound by residues Y28, G30, and G32. H48 is an active-site residue. D49 lines the Ca(2+) pocket. D92 is an active-site residue.

This sequence belongs to the phospholipase A2 family. Group I subfamily. D49 sub-subfamily. Monomer. Ca(2+) is required as a cofactor. Expressed by the venom gland.

It is found in the secreted. The catalysed reaction is a 1,2-diacyl-sn-glycero-3-phosphocholine + H2O = a 1-acyl-sn-glycero-3-phosphocholine + a fatty acid + H(+). PLA2 catalyzes the calcium-dependent hydrolysis of the 2-acyl groups in 3-sn-phosphoglycerides. In Laticauda semifasciata (Black-banded sea krait), this protein is Basic phospholipase A2 3.